A 494-amino-acid polypeptide reads, in one-letter code: Nuclear distribution protein PAC1 (494 aa).

The LisH domain occupies 14–46 (QKNELDKSVLRYLNWNYKQTVRHEHAQDYESVR). The stretch at 90-123 (NSIVRLQKKIIELEQNTETLVSQIKDLNTQVSEL) forms a coiled coil. WD repeat units lie at residues 153-192 (NVES…IPLA), 196-244 (SHTK…CKFQ), 251-292 (GHEH…SLKT), 295-334 (PHSQ…SVGT), 347-395 (HFIE…LMAH), 415-454 (GHLS…HVWE), and 457-492 (HTGF…SNVF).

The protein belongs to the WD repeat LIS1/nudF family. As to quaternary structure, self-associates. Interacts with NDL1 and dynein.

It localises to the cytoplasm. It is found in the cytoskeleton. The protein localises to the spindle pole. In terms of biological role, positively regulates the activity of the minus-end directed microtubule motor protein dynein. Plays a central role in positioning the mitotic spindle at the bud neck during cell division. Targets cytoplasmic dynein to microtubule plus ends, thereby promoting dynein-mediated microtubule sliding along the bud cortex and consequently the movement of the mitotic spindle to the bud neck. In Saccharomyces cerevisiae (strain JAY291) (Baker's yeast), this protein is Nuclear distribution protein PAC1.